Here is a 430-residue protein sequence, read N- to C-terminus: Serine hydroxymethyltransferase (430 aa).

(6S)-5,6,7,8-tetrahydrofolate-binding positions include Leu123 and 127–129; that span reads GHL. Lys232 carries the N6-(pyridoxal phosphate)lysine modification. Position 248 (Glu248) interacts with (6S)-5,6,7,8-tetrahydrofolate.

This sequence belongs to the SHMT family. As to quaternary structure, homodimer. Pyridoxal 5'-phosphate is required as a cofactor.

The protein localises to the cytoplasm. The enzyme catalyses (6R)-5,10-methylene-5,6,7,8-tetrahydrofolate + glycine + H2O = (6S)-5,6,7,8-tetrahydrofolate + L-serine. The protein operates within one-carbon metabolism; tetrahydrofolate interconversion. Its pathway is amino-acid biosynthesis; glycine biosynthesis; glycine from L-serine: step 1/1. In terms of biological role, catalyzes the reversible interconversion of serine and glycine with tetrahydrofolate (THF) serving as the one-carbon carrier. This reaction serves as the major source of one-carbon groups required for the biosynthesis of purines, thymidylate, methionine, and other important biomolecules. Also exhibits THF-independent aldolase activity toward beta-hydroxyamino acids, producing glycine and aldehydes, via a retro-aldol mechanism. This chain is Serine hydroxymethyltransferase, found in Anaplasma marginale (strain St. Maries).